The sequence spans 243 residues: tRNA (guanine-N(7)-)-methyltransferase (243 aa).

S-adenosyl-L-methionine-binding residues include Glu74, Glu99, Asp126, and Asp149. Asp149 is an active-site residue. Substrate is bound by residues Lys153, Asp185, and 221-224 (TKFE).

Belongs to the class I-like SAM-binding methyltransferase superfamily. TrmB family.

It carries out the reaction guanosine(46) in tRNA + S-adenosyl-L-methionine = N(7)-methylguanosine(46) in tRNA + S-adenosyl-L-homocysteine. Its pathway is tRNA modification; N(7)-methylguanine-tRNA biosynthesis. Catalyzes the formation of N(7)-methylguanine at position 46 (m7G46) in tRNA. This is tRNA (guanine-N(7)-)-methyltransferase from Psychromonas ingrahamii (strain DSM 17664 / CCUG 51855 / 37).